The sequence spans 933 residues: Collagen alpha-2(I) chain (933 aa).

The span at 1 to 16 (SGGFDFGVGLGPGPMG) shows a compositional bias: gly residues. Disordered regions lie at residues 1-191 (SGGF…LTGA) and 206-933 (LPGP…AGVR). Low complexity predominate over residues 17-53 (LMGPRGPPGASGAPGPQGFQGPAGEPGEPGQTGPAGA). Pro24 and Pro30 each carry 4-hydroxyproline. The segment covering 57–72 (KAGEDGHPGKPGRPGE) has biased composition (basic and acidic residues). Position 94 is a 5-hydroxylysine; alternate (Lys94). Residue Lys94 is glycosylated (O-linked (Gal...) hydroxylysine; alternate). 3 stretches are compositionally biased toward low complexity: residues 108–137 (VGAP…SAGP), 162–176 (AGPR…VSGP), and 213–228 (PGPV…RGLV). Residues 280–289 (GLRGGPGSRG) are compositionally biased toward gly residues. 4-hydroxyproline is present on residues Pro317 and Pro320. Residues 413 to 422 (GVQGGKGEQG) show a composition bias toward gly residues. Composition is skewed to low complexity over residues 468–485 (PGES…SRGP) and 497–507 (EPGVVGAPGTA). Residues 508–517 (GPAGSGGLPG) show a composition bias toward gly residues. 3 stretches are compositionally biased toward low complexity: residues 540–584 (VGTT…PRGS), 591–611 (VGPA…QPGA), and 627–640 (PTGP…SGPN). A compositionally biased stretch (gly residues) spans 644–656 (GPAGGRGDGGPPG). The segment covering 657–667 (LTGFPGAAGRT) has biased composition (low complexity). The span at 704–713 (GETGAGGPPG) shows a compositional bias: gly residues. 2 stretches are compositionally biased toward low complexity: residues 721-748 (SGEP…LGLP) and 756-781 (LPGV…RGPS). Residues 795–807 (AGRDGLPGHKGER) show a composition bias toward basic and acidic residues. Composition is skewed to low complexity over residues 809-831 (YAGN…VGPA) and 840-860 (PGPA…PSGP). Positions 864–874 (RGDKGEGDKGP) are enriched in basic and acidic residues.

This sequence belongs to the fibrillar collagen family. Trimers of one alpha 2(I) and two alpha 1(I) chains. Interacts (via C-terminus) with TMEM131 (via PapD-L domain); the interaction is direct and is involved in assembly and TRAPPIII ER-to-Golgi transport complex-dependent secretion of collagen. Post-translationally, prolines at the third position of the tripeptide repeating unit (G-X-Y) are hydroxylated in some or all of the chains. As to expression, expressed in bones.

It is found in the secreted. The protein localises to the extracellular space. Its subcellular location is the extracellular matrix. In terms of biological role, type I collagen is a member of group I collagen (fibrillar forming collagen). This chain is Collagen alpha-2(I) chain, found in Glyptodon sp. (strain SLP-2019) (Giant armadillo).